The following is a 497-amino-acid chain: Serine/threonine protein phosphatase 2A 57 kDa regulatory subunit B' epsilon isoform (497 aa).

The segment at 12-71 (KFNKSDQHHQDNNNNNNNTSTNTVVRGSRTTTPAPSSVSNGESQTTAQSPSQTPNHPMFT) is disordered. Positions 23 to 34 (NNNNNNNTSTNT) are enriched in low complexity. Polar residues predominate over residues 35 to 71 (VVRGSRTTTPAPSSVSNGESQTTAQSPSQTPNHPMFT).

Belongs to the phosphatase 2A regulatory subunit B56 family. In terms of assembly, PP2A consists of a common heteromeric enzyme, composed of a catalytic subunit (subunits C), a constant regulatory subunit (subunit A), and a variety of regulatory subunits such as subunits B (the R2/B/PR55/B55, R3/B''/PR72/PR130/PR59 and R5/B'/B56 families). Expressed ubiquitously.

The protein resides in the cytoplasm. Its function is as follows. The B regulatory subunit may modulate substrate selectivity and catalytic activity, and may also direct the localization of the catalytic enzyme to a particular subcellular compartment. This chain is Serine/threonine protein phosphatase 2A 57 kDa regulatory subunit B' epsilon isoform (B'EPSILON), found in Arabidopsis thaliana (Mouse-ear cress).